Consider the following 99-residue polypeptide: Nucleoid-associated protein SSA_0326 (99 aa).

Residues 1-15 (MMNMQSMMKQAQKLQ) show a composition bias toward low complexity. The tract at residues 1-23 (MMNMQSMMKQAQKLQKQMEKGQA) is disordered.

This sequence belongs to the YbaB/EbfC family. Homodimer.

The protein resides in the cytoplasm. It is found in the nucleoid. Functionally, binds to DNA and alters its conformation. May be involved in regulation of gene expression, nucleoid organization and DNA protection. The sequence is that of Nucleoid-associated protein SSA_0326 from Streptococcus sanguinis (strain SK36).